A 207-amino-acid polypeptide reads, in one-letter code: Pyridoxine/pyridoxamine 5'-phosphate oxidase (207 aa).

Residues 53-58, 68-69, Lys75, and Gln97 each bind FMN; these read RMVLLK and YT. Lys58 serves as a coordination point for substrate. Residues Tyr115, Arg119, and Ser123 each contribute to the substrate site. Residues 132–133 and Trp177 each bind FMN; that span reads QS. Residue 183–185 participates in substrate binding; sequence RLH. Arg187 lines the FMN pocket.

This sequence belongs to the pyridoxamine 5'-phosphate oxidase family. As to quaternary structure, homodimer. It depends on FMN as a cofactor.

The enzyme catalyses pyridoxamine 5'-phosphate + O2 + H2O = pyridoxal 5'-phosphate + H2O2 + NH4(+). It catalyses the reaction pyridoxine 5'-phosphate + O2 = pyridoxal 5'-phosphate + H2O2. It functions in the pathway cofactor metabolism; pyridoxal 5'-phosphate salvage; pyridoxal 5'-phosphate from pyridoxamine 5'-phosphate: step 1/1. The protein operates within cofactor metabolism; pyridoxal 5'-phosphate salvage; pyridoxal 5'-phosphate from pyridoxine 5'-phosphate: step 1/1. Its function is as follows. Catalyzes the oxidation of either pyridoxine 5'-phosphate (PNP) or pyridoxamine 5'-phosphate (PMP) into pyridoxal 5'-phosphate (PLP). This Bartonella henselae (strain ATCC 49882 / DSM 28221 / CCUG 30454 / Houston 1) (Rochalimaea henselae) protein is Pyridoxine/pyridoxamine 5'-phosphate oxidase.